We begin with the raw amino-acid sequence, 216 residues long: Small ribosomal subunit protein eS6 (216 aa).

This sequence belongs to the eukaryotic ribosomal protein eS6 family.

In Staphylothermus marinus (strain ATCC 43588 / DSM 3639 / JCM 9404 / F1), this protein is Small ribosomal subunit protein eS6.